A 499-amino-acid polypeptide reads, in one-letter code: 2,3-bisphosphoglycerate-independent phosphoglycerate mutase (499 aa).

Positions 10 and 60 each coordinate Mn(2+). Catalysis depends on S60, which acts as the Phosphoserine intermediate. Substrate-binding positions include H121, 151–152 (RD), R182, R188, 253–256 (RPDR), and K326. 5 residues coordinate Mn(2+): D391, H395, D434, H435, and H452.

It belongs to the BPG-independent phosphoglycerate mutase family. Monomer. It depends on Mn(2+) as a cofactor.

It catalyses the reaction (2R)-2-phosphoglycerate = (2R)-3-phosphoglycerate. Its pathway is carbohydrate degradation; glycolysis; pyruvate from D-glyceraldehyde 3-phosphate: step 3/5. Catalyzes the interconversion of 2-phosphoglycerate and 3-phosphoglycerate. The protein is 2,3-bisphosphoglycerate-independent phosphoglycerate mutase of Metamycoplasma hominis (strain ATCC 23114 / DSM 25592 / NBRC 14850 / NCTC 10111 / PG21) (Mycoplasma hominis).